The following is a 95-amino-acid chain: Co-chaperonin GroES (95 aa).

Belongs to the GroES chaperonin family. Heptamer of 7 subunits arranged in a ring. Interacts with the chaperonin GroEL.

The protein localises to the cytoplasm. Functionally, together with the chaperonin GroEL, plays an essential role in assisting protein folding. The GroEL-GroES system forms a nano-cage that allows encapsulation of the non-native substrate proteins and provides a physical environment optimized to promote and accelerate protein folding. GroES binds to the apical surface of the GroEL ring, thereby capping the opening of the GroEL channel. This chain is Co-chaperonin GroES, found in Vesicomyosocius okutanii subsp. Calyptogena okutanii (strain HA).